An 824-amino-acid polypeptide reads, in one-letter code: Leucine--tRNA ligase (824 aa).

A 'HIGH' region motif is present at residues 42 to 52 (PYPSGKIHMGH). Residues 581-585 (KMSKS) carry the 'KMSKS' region motif. Residue Lys584 coordinates ATP.

The protein belongs to the class-I aminoacyl-tRNA synthetase family.

It localises to the cytoplasm. It catalyses the reaction tRNA(Leu) + L-leucine + ATP = L-leucyl-tRNA(Leu) + AMP + diphosphate. This Geobacter sp. (strain M21) protein is Leucine--tRNA ligase.